Consider the following 443-residue polypeptide: FAD-dependent monooxygenase orf3 (443 aa).

Residues 5-25 traverse the membrane as a helical segment; sequence SIEVAIIGAGITGITLALGLL. FAD contacts are provided by Glu35 and Gly48. Asn75 and Asn87 each carry an N-linked (GlcNAc...) asparagine glycan. Arg116 lines the FAD pocket. Residue Arg199 is part of the active site. Asp315 and Ala328 together coordinate FAD.

It belongs to the paxM FAD-dependent monooxygenase family. FAD serves as cofactor.

Its subcellular location is the membrane. The protein operates within secondary metabolite biosynthesis. Its function is as follows. FAD-dependent monooxygenase; part of the gene cluster that mediates the biosynthesis of nigerpyrone and its derivatives carbonarone A and pestalamide A. The biosynthesis pathway begins with the polyketide assembly by epaA to form phenylacetyl triketide precursor from successive condensation of two malonyl-CoA, presumably with one phenylacetyl-CoA starter unit produced by the phenylacetyl-CoA ligase epaB. For the nigerpyrone biosynthesis, the reactive polyketide chain is released as an aldehyde through the R-domain. A nonenzymatic cyclization and dehydration may create nigerpyrone. For the biosynthesis of carbonarone A and pestalamide A, an extra methyl group is added through the C-methyltransferase domain. Several further steps involving the dehydrogenase orf1, the cytochrome P450 monooxygenase orf2 and the FAD-dependent monooxygenase orf3 are required to form a carbonarone A precursor which is converted to carbonarone A via cyclization. The O-acetyltransferase epaC could catalyze the transfer of 2-methylsuccinyl-CoA, a common intermediate in the ethylmalonyl-CoA pathway, to generate the final product pestalamide A. This chain is FAD-dependent monooxygenase orf3, found in Aspergillus niger (strain ATCC MYA-4892 / CBS 513.88 / FGSC A1513).